The chain runs to 239 residues: Phosphothreonine lyase OspF (239 aa).

The Proton donor role is filled by H104. Residue K134 is the Proton acceptor of the active site.

This sequence belongs to the phosphothreonine lyase family.

The protein resides in the secreted. Its function is as follows. Catalyzes the removal of the phosphate group from the phosphothreonine in the mitogen-activated protein kinases such as MAPK2/ERK2, MAPK3/ERK1, MAPK8 and MAPK14 in an irreversible reaction, thus preventing the downstream phosphorylation of histone H3. This epigenetic modification results in inhibition of the transcription of a specific subset of pro-inflammatory genes, and ultimately to a reduced immune response against the invading pathogen. The diminished immune response enhances the bacterium's ability to disseminate and multiply within the host. The polypeptide is Phosphothreonine lyase OspF (ospF) (Shigella sonnei (strain Ss046)).